A 1008-amino-acid polypeptide reads, in one-letter code: ATP-dependent zinc metalloprotease FTSH 12, chloroplastic (1008 aa).

Residues 1–49 constitute a chloroplast transit peptide; it reads MEIAISYKPNPLISSSTQLLKRSKSFGLVRFPAKYGLGATRKKQLFRVY. The next 2 helical transmembrane spans lie at 154–174 and 427–447; these read AALF…YVAI and IHYF…LWFI. Residue 533-540 participates in ATP binding; that stretch reads GPPGTGKT. Position 769 (His769) interacts with Zn(2+). Glu770 is a catalytic residue. The Zn(2+) site is built by His773 and Asp849.

In the N-terminal section; belongs to the AAA ATPase family. It in the C-terminal section; belongs to the peptidase M41 family. The cofactor is Zn(2+).

The protein resides in the plastid. It localises to the chloroplast thylakoid membrane. In terms of biological role, probable ATP-dependent zinc metallopeptidase. The polypeptide is ATP-dependent zinc metalloprotease FTSH 12, chloroplastic (FTSH12) (Arabidopsis thaliana (Mouse-ear cress)).